A 61-amino-acid chain; its full sequence is Type IV secretion system protein PtlI homolog (61 aa).

Residues 1–25 (MIHAHSNARLLRWAILAIAPATLGA) form the signal peptide. Positions 29–61 (NGPPGLPYPDGKPLIPINTAAPEQGSSCQTRAP) are disordered. Over residues 52-61 (QGSSCQTRAP) the composition is skewed to polar residues.

This chain is Type IV secretion system protein PtlI homolog (ptlI), found in Bordetella bronchiseptica (strain ATCC BAA-588 / NCTC 13252 / RB50) (Alcaligenes bronchisepticus).